Here is a 189-residue protein sequence, read N- to C-terminus: Tumor protein p53-inducible protein 11 (189 aa).

The Cytoplasmic portion of the chain corresponds to 1–63 (MAGKQPPPLM…FAVREPLGLR (63 aa)). Phosphoserine is present on Ser-14. Residues 64-84 (VWQFLSAMLFSSVAIMALALP) form a helical membrane-spanning segment. Residues 85–108 (DQLYDAVFDGAEVTSKTPIRLYGG) lie on the Extracellular side of the membrane. The helical transmembrane segment at 109–129 (ALLSISLIMWNALYTAEKVII) threads the bilayer. A topological domain (cytoplasmic) is located at residue Arg-130. Residues 131–151 (WTLLTEACYFGVQSLVVTATL) traverse the membrane as a helical segment. At 152 to 155 (AETG) the chain is on the extracellular side. A helical membrane pass occupies residues 156–176 (LMSLGTVLLLASRLLFVIVSI). At 177-189 (YYYYQVGRKPKKV) the chain is on the cytoplasmic side.

The protein localises to the membrane. The polypeptide is Tumor protein p53-inducible protein 11 (Trp53i11) (Mus musculus (Mouse)).